We begin with the raw amino-acid sequence, 530 residues long: T-complex protein 1 subunit delta (530 aa).

Positions 1–13 are enriched in polar residues; sequence MVSQAKQPSNATF. The segment at 1 to 20 is disordered; it reads MVSQAKQPSNATFKNREKPQ.

The protein belongs to the TCP-1 chaperonin family. As to quaternary structure, heterooligomeric complex of about 850 to 900 kDa that forms two stacked rings, 12 to 16 nm in diameter.

It is found in the cytoplasm. Functionally, molecular chaperone; assists the folding of proteins upon ATP hydrolysis. Known to play a role, in vitro, in the folding of actin and tubulin. This is T-complex protein 1 subunit delta (CCT4) from Kluyveromyces lactis (strain ATCC 8585 / CBS 2359 / DSM 70799 / NBRC 1267 / NRRL Y-1140 / WM37) (Yeast).